A 200-amino-acid chain; its full sequence is Putative 3-methyladenine DNA glycosylase (200 aa).

Belongs to the DNA glycosylase MPG family.

The polypeptide is Putative 3-methyladenine DNA glycosylase (Rhodopseudomonas palustris (strain BisB18)).